Consider the following 123-residue polypeptide: Small ribosomal subunit protein uS12 (123 aa).

The residue at position 89 (Asp-89) is a 3-methylthioaspartic acid.

This sequence belongs to the universal ribosomal protein uS12 family. In terms of assembly, part of the 30S ribosomal subunit. Contacts proteins S8 and S17. May interact with IF1 in the 30S initiation complex.

Functionally, with S4 and S5 plays an important role in translational accuracy. In terms of biological role, interacts with and stabilizes bases of the 16S rRNA that are involved in tRNA selection in the A site and with the mRNA backbone. Located at the interface of the 30S and 50S subunits, it traverses the body of the 30S subunit contacting proteins on the other side and probably holding the rRNA structure together. The combined cluster of proteins S8, S12 and S17 appears to hold together the shoulder and platform of the 30S subunit. The chain is Small ribosomal subunit protein uS12 from Maridesulfovibrio salexigens (strain ATCC 14822 / DSM 2638 / NCIMB 8403 / VKM B-1763) (Desulfovibrio salexigens).